Reading from the N-terminus, the 440-residue chain is Chromosome partition protein MukF (440 aa).

The interval 208 to 236 is leucine-zipper; that stretch reads LSETSGTLRELQDTLEAAGDKLQANLLRI.

Belongs to the MukF family. As to quaternary structure, interacts, and probably forms a ternary complex, with MukE and MukB via its C-terminal region. The complex formation is stimulated by calcium or magnesium. It is required for an interaction between MukE and MukB.

The protein localises to the cytoplasm. Its subcellular location is the nucleoid. Involved in chromosome condensation, segregation and cell cycle progression. May participate in facilitating chromosome segregation by condensation DNA from both sides of a centrally located replisome during cell division. Not required for mini-F plasmid partitioning. Probably acts via its interaction with MukB and MukE. Overexpression results in anucleate cells. It has a calcium binding activity. The polypeptide is Chromosome partition protein MukF (Shigella boydii serotype 4 (strain Sb227)).